The sequence spans 1291 residues: Histone-lysine N-methyltransferase SETDB1 (1291 aa).

Residues 18-64 (ESEEIAELQQAVVEELGISMEELRHFIDEELEKMDCVQQRKKQLAEL) are a coiled coil. Residues 108 to 147 (RDSSSEDESSRPTEIIEIPDEDDDVLSIDSGDAGSRTPKD) are disordered. 2 positions are modified to phosphoserine: serine 112 and serine 117. Phosphothreonine is present on threonine 120. The segment covering 124–133 (EIPDEDDDVL) has biased composition (acidic residues). Lysine 182 is covalently cross-linked (Glycyl lysine isopeptide (Lys-Gly) (interchain with G-Cter in SUMO2); alternate). A Glycyl lysine isopeptide (Lys-Gly) (interchain with G-Cter in ubiquitin); alternate cross-link involves residue lysine 182. Tudor domains lie at 257–320 (KLYV…LKKT) and 347–403 (LLKS…SMKT). Positions 404 to 545 (SSASALEKKQ…APAPSALPAP (142 aa)) are disordered. Over residues 433 to 444 (QYTQDLTGTGTQ) the composition is skewed to polar residues. Over residues 448–468 (VEPPQPTAPPAPPFPPAPPLS) the composition is skewed to pro residues. A compositionally biased stretch (polar residues) spans 477–515 (ESQLAQSRKQVAKKSTSFRPGSVGSGHSSPTSPALSENV). The span at 528–539 (SPLGSTASAPAP) shows a compositional bias: low complexity. Residues 594-665 (YRGKNPLLVP…EMFCLDPYVL (72 aa)) form the MBD domain. The 74-residue stretch at 727–800 (VGCDCKDGCR…MCTNRLVQHG (74 aa)) folds into the Pre-SET domain. Cysteine 729, cysteine 731, cysteine 735, cysteine 741, cysteine 743, cysteine 781, cysteine 785, cysteine 787, and cysteine 792 together coordinate Zn(2+). The 464-residue stretch at 803–1266 (VRLQLFKTQN…AGTELTWDYN (464 aa)) folds into the SET domain. Residues 813–815 (KGW), aspartate 851, and tyrosine 853 each bind S-adenosyl-L-methionine. Lysine 867 is covalently cross-linked (Glycyl lysine isopeptide (Lys-Gly) (interchain with G-Cter in ubiquitin)). The interval 868-1160 (EGYESDAPCS…MTGPMKRQVA (293 aa)) is disordered. Acidic residues predominate over residues 896 to 907 (EDPEESNDDSSD). The segment covering 951 to 963 (DLGPPHIPVPPSI) has biased composition (pro residues). Serine 1025 bears the Phosphoserine mark. The segment covering 1031–1050 (IKDEGDIKQAKKEDTDDRNK) has biased composition (basic and acidic residues). A Glycyl lysine isopeptide (Lys-Gly) (interchain with G-Cter in SUMO2); alternate cross-link involves residue lysine 1032. A Glycyl lysine isopeptide (Lys-Gly) (interchain with G-Cter in SUMO1); alternate cross-link involves residue lysine 1032. A Glycyl lysine isopeptide (Lys-Gly) (interchain with G-Cter in SUMO2) cross-link involves residue lysine 1038. Residues 1052-1063 (SVVTESSRNYGY) show a composition bias toward polar residues. Serine 1066 bears the Phosphoserine mark. A Glycyl lysine isopeptide (Lys-Gly) (interchain with G-Cter in SUMO2) cross-link involves residue lysine 1069. The segment covering 1100–1115 (LTLSSSTESEGESGTS) has biased composition (low complexity). The segment covering 1116-1140 (RKPTAGQTSATAVDSDDIQTISSGS) has biased composition (polar residues). Lysine 1149 participates in a covalent cross-link: Glycyl lysine isopeptide (Lys-Gly) (interchain with G-Cter in SUMO2). N6,N6,N6-trimethyllysine; alternate occurs at positions 1170 and 1178. 2 positions are modified to N6,N6-dimethyllysine; alternate: lysine 1170 and lysine 1178. Residues arginine 1220 and 1223 to 1224 (NH) contribute to the S-adenosyl-L-methionine site. Cysteine 1226, cysteine 1279, cysteine 1281, and cysteine 1286 together coordinate Zn(2+). In terms of domain architecture, Post-SET spans 1275–1291 (KELLCCCGAIECRGRLL).

It belongs to the class V-like SAM-binding methyltransferase superfamily. Histone-lysine methyltransferase family. Suvar3-9 subfamily. As to quaternary structure, part of a complex containing at least CDYL, REST, WIZ, SETDB1, EHMT1 and EHMT2. Forms a complex with ATRX, TRIM28 and ZNF274. Probably part of a corepressor complex containing ZNF304, TRIM28, SETDB1 and DNMT1. Interacts with TRIM28/TIF1B. Interacts with ATF7IP and ATF7IP2; the interaction with ATF7IP protects SETDB1 from proteasomal degradation and is required to stimulate histone methyltransferase activity and facilitate the conversion of dimethylated to trimethylated H3 'Lys-9'. Interacts with CBX1 and CBX5. Interacts with DNMT3A and DNMT3B. Interacts with SUMO2. Interacts with MPHOSPH8. Interacts with ERG. Interacts with HDAC1, HDAC2, SIN3A and SIN3B. Interacts with ATRX. Interacts with RESF1. Interacts with ZNF638. Interacts with TASOR. Interacts with ZNF263; recruited to the SIX3 promoter along with other proteins involved in chromatin modification and transcriptional corepression where it contributes to transcriptional repression. Interacts with PHF13; the interaction probably enhances SETDB1 chromatin-associated levels and activity. Interacts with VRK1. In terms of processing, degraded by the proteasome, shielded by interaction with ATF7IP. Post-translationally, monoubiquitinated at Lys-867 by E2 enzymes of the UBE2E family. The conjugated-Ub is protected from deubiquitination by the SET domain. Monoubiquitination at Lys-867 is required for catalytic activity, H3K9 methylation and endogenous retrovirus silencing. Widely expressed. High expression in testis.

It localises to the nucleus. Its subcellular location is the cytoplasm. It is found in the chromosome. The catalysed reaction is N(6),N(6)-dimethyl-L-lysyl(9)-[histone H3] + S-adenosyl-L-methionine = N(6),N(6),N(6)-trimethyl-L-lysyl(9)-[histone H3] + S-adenosyl-L-homocysteine + H(+). Histone methyltransferase that specifically trimethylates 'Lys-9' of histone H3. H3 'Lys-9' trimethylation represents a specific tag for epigenetic transcriptional repression by recruiting HP1 (CBX1, CBX3 and/or CBX5) proteins to methylated histones. Mainly functions in euchromatin regions, thereby playing a central role in the silencing of euchromatic genes. H3 'Lys-9' trimethylation is coordinated with DNA methylation. Required for HUSH-mediated heterochromatin formation and gene silencing. Forms a complex with MBD1 and ATF7IP that represses transcription and couples DNA methylation and histone 'Lys-9' trimethylation. Its activity is dependent on MBD1 and is heritably maintained through DNA replication by being recruited by CAF-1. SETDB1 is targeted to histone H3 by TRIM28/TIF1B, a factor recruited by KRAB zinc-finger proteins. Probably forms a corepressor complex required for activated KRAS-mediated promoter hypermethylation and transcriptional silencing of tumor suppressor genes (TSGs) or other tumor-related genes in colorectal cancer (CRC) cells. Required to maintain a transcriptionally repressive state of genes in undifferentiated embryonic stem cells (ESCs). In ESCs, in collaboration with TRIM28, is also required for H3K9me3 and silencing of endogenous and introduced retroviruses in a DNA-methylation independent-pathway. Associates at promoter regions of tumor suppressor genes (TSGs) leading to their gene silencing. The SETDB1-TRIM28-ZNF274 complex may play a role in recruiting ATRX to the 3'-exons of zinc-finger coding genes with atypical chromatin signatures to establish or maintain/protect H3K9me3 at these transcriptionally active regions. The sequence is that of Histone-lysine N-methyltransferase SETDB1 from Homo sapiens (Human).